The following is a 434-amino-acid chain: MAASARGLRTLQSAHSSTTVPRLQLAVSRCYATTTSPDPPITNSSNSSNSTPTPKQRITAFKDKLNAGPSFSDFVSGGGGGASNDRVPLDPAEAYALKTALVGPPGRKKQIIRLPSWLKTPIPDTPNYRRIKSDLRGLNLHTVCEEARCPNISDCWGGSSKSAATATIMLMGDTCTRGCRFCSVKTSRTPPPLDPHEPENTAEALSRWGLGYVVMTSVDRDDLADGGARHVAETVRKVKQKAPGILLECLTGDYAGDLEMVALVATSGLDVFAHNVETVEALTPFVRDRRATFQQSLRVLKAAKEARPELITKTSIMLGLGETETQLWETLRALRTVDVDVVTFGQYMRPTKRHMAVHEYVRPGVFDLWKERALEMGFLYCASGPLVRSSYKAGEAFIENVLKKRRGEGADGGDGGNSTRREDVERLVAGGVVR.

The transit peptide at Met-1–Tyr-31 directs the protein to the mitochondrion. A compositionally biased stretch (low complexity) spans Thr-34–Pro-54. Residues Thr-34–Lys-55 are disordered. Cys-144, Cys-149, Cys-155, Cys-175, Cys-179, Cys-182, and Ser-390 together coordinate [4Fe-4S] cluster. The region spanning Gly-158–Leu-379 is the Radical SAM core domain.

This sequence belongs to the radical SAM superfamily. Lipoyl synthase family. It depends on [4Fe-4S] cluster as a cofactor.

The protein resides in the mitochondrion. It catalyses the reaction [[Fe-S] cluster scaffold protein carrying a second [4Fe-4S](2+) cluster] + N(6)-octanoyl-L-lysyl-[protein] + 2 oxidized [2Fe-2S]-[ferredoxin] + 2 S-adenosyl-L-methionine + 4 H(+) = [[Fe-S] cluster scaffold protein] + N(6)-[(R)-dihydrolipoyl]-L-lysyl-[protein] + 4 Fe(3+) + 2 hydrogen sulfide + 2 5'-deoxyadenosine + 2 L-methionine + 2 reduced [2Fe-2S]-[ferredoxin]. The protein operates within protein modification; protein lipoylation via endogenous pathway; protein N(6)-(lipoyl)lysine from octanoyl-[acyl-carrier-protein]: step 2/2. Its function is as follows. Catalyzes the radical-mediated insertion of two sulfur atoms into the C-6 and C-8 positions of the octanoyl moiety bound to the lipoyl domains of lipoate-dependent enzymes, thereby converting the octanoylated domains into lipoylated derivatives. This Paracoccidioides brasiliensis (strain Pb03) protein is Lipoyl synthase, mitochondrial.